Reading from the N-terminus, the 383-residue chain is BRISC and BRCA1-A complex member 2 (383 aa).

An N-acetylmethionine modification is found at M1. S2 is modified (phosphoserine). 2 UEV-like regions span residues 30–147 and 275–364; these read DATN…TLLE and IAAF…RAKA.

The protein belongs to the BABAM2 family. Component of the ARISC complex, at least composed of UIMC1/RAP80, ABRAXAS1, BRCC3/BRCC36, BABAM2 and BABAM1/NBA1. Component of the BRCA1-A complex, at least composed of BRCA1, BARD1, UIMC1/RAP80, ABRAXAS1, BRCC3/BRCC36, BABAM2 and BABAM1/NBA1. In the BRCA1-A complex, interacts directly with ABRAXAS1, BRCC3/BRCC36 and BABAM1/NBA1. Binds polyubiquitin. Component of the BRISC complex, at least composed of ABRAXAS2, BRCC3/BRCC36, BABAM2 and BABAM1/NBA1. Identified in a complex with SHMT2 and the other subunits of the BRISC complex. Component of the BRCA1/BRCA2 containing complex (BRCC), which also contains BRCA1, BRCA2, BARD1, BRCC3/BRCC36 and RAD51. BRCC is a ubiquitin E3 ligase complex that enhances cellular survival following DNA damage. May interact with FAS and TNFRSF1A. Expressed in all cell lines examined. Highly expressed in placenta.

It localises to the cytoplasm. The protein localises to the nucleus. Component of the BRCA1-A complex, a complex that specifically recognizes 'Lys-63'-linked ubiquitinated histones H2A and H2AX at DNA lesions sites, leading to target the BRCA1-BARD1 heterodimer to sites of DNA damage at double-strand breaks (DSBs). The BRCA1-A complex also possesses deubiquitinase activity that specifically removes 'Lys-63'-linked ubiquitin on histones H2A and H2AX. In the BRCA1-A complex, it acts as an adapter that bridges the interaction between BABAM1/NBA1 and the rest of the complex, thereby being required for the complex integrity and modulating the E3 ubiquitin ligase activity of the BRCA1-BARD1 heterodimer. Component of the BRISC complex, a multiprotein complex that specifically cleaves 'Lys-63'-linked ubiquitin in various substrates. Within the BRISC complex, acts as an adapter that bridges the interaction between BABAM1/NBA1 and the rest of the complex, thereby being required for the complex integrity. The BRISC complex is required for normal mitotic spindle assembly and microtubule attachment to kinetochores via its role in deubiquitinating NUMA1. The BRISC complex plays a role in interferon signaling via its role in the deubiquitination of the interferon receptor IFNAR1; deubiquitination increases IFNAR1 activity by enhancing its stability and cell surface expression. Down-regulates the response to bacterial lipopolysaccharide (LPS) via its role in IFNAR1 deubiquitination. May play a role in homeostasis or cellular differentiation in cells of neural, epithelial and germline origins. May also act as a death receptor-associated anti-apoptotic protein, which inhibits the mitochondrial apoptotic pathway. May regulate TNF-alpha signaling through its interactions with TNFRSF1A; however these effects may be indirect. This chain is BRISC and BRCA1-A complex member 2, found in Homo sapiens (Human).